We begin with the raw amino-acid sequence, 490 residues long: Histone-lysine N-methyltransferase, H3 lysine-9 specific (490 aa).

The Chromo domain occupies 8 to 69; it reads YEVERIVDEK…RKRRLKGSNS (62 aa). Disordered stretches follow at residues 61–133 and 150–190; these read KRRL…TALT and KKLG…KPRN. Positions 102–114 are enriched in basic and acidic residues; that stretch reads FSRELNVKKENKK. Polar residues predominate over residues 115 to 133; the sequence is VFSSQTTKRQSRKQSTALT. N6,N6,N6-trimethyllysine; alternate is present on Lys-127. Lys-127 carries the N6-methyllysine; alternate modification. Basic and acidic residues predominate over residues 155–168; sequence TRNEVKEESQKREL. Over residues 169–185 the composition is skewed to polar residues; it reads VSNSIKEATSPKTSSIL. Positions 258 to 325 constitute a Pre-SET domain; it reads SGCNCSSLGG…ECPNRVVQRG (68 aa). Zn(2+)-binding residues include Cys-260, Cys-262, Cys-268, Cys-276, Cys-278, Cys-307, Cys-311, Cys-313, and Cys-317. The SET domain occupies 328–452; sequence LPLEIFKTKE…PLEELTFDYA (125 aa). S-adenosyl-L-methionine is bound by residues 338–340, Tyr-381, Arg-406, and 407–410; these read KGW and FFNH. Cys-412 provides a ligand contact to Zn(2+). The autoregulatory loop stretch occupies residues 453–472; that stretch reads GAKDFSPVQSQKSQQNRISK. Lys-455 bears the N6,N6,N6-trimethyllysine; by autocatalysis; alternate mark. Residue Lys-455 is modified to N6,N6-dimethyllysine; by autocatalysis; alternate. An N6-methyllysine; by autocatalysis; alternate modification is found at Lys-455. An N6-methyllysine modification is found at Lys-464. One can recognise a Post-SET domain in the interval 473 to 489; the sequence is LRRQCKCGSANCRGWLF. 3 residues coordinate Zn(2+): Cys-477, Cys-479, and Cys-484. 477 to 478 provides a ligand contact to S-adenosyl-L-methionine; the sequence is CK.

Belongs to the class V-like SAM-binding methyltransferase superfamily. Histone-lysine methyltransferase family. Suvar3-9 subfamily. As to quaternary structure, component of the Clr4 methyltransferase complex (ClrC) composed of at least clr4, rik1, pcu4, rbx1, raf1 and raf2. The cullin pcu4, rik1, raf1, raf2 and the ring-box protein rbx1 are components of an E3 ubiquitin ligase, whose activity is essential for heterochromatin assembly. Interacts directly with pcu4. Interacts with mlo3. Autocatalytic methylation of specific lysine residues in an internal loop (autoregulatory loop) promote a conformational switch that enhances the H3K9me activity of clr4.

The protein resides in the nucleus. The protein localises to the cytoplasm. It localises to the cytoskeleton. It is found in the microtubule organizing center. Its subcellular location is the spindle pole body. The protein resides in the chromosome. It catalyses the reaction L-lysyl(9)-[histone H3] + 3 S-adenosyl-L-methionine = N(6),N(6),N(6)-trimethyl-L-lysyl(9)-[histone H3] + 3 S-adenosyl-L-homocysteine + 3 H(+). The catalysed reaction is N(6)-methyl-L-lysyl(9)-[histone H3] + S-adenosyl-L-methionine = N(6),N(6)-dimethyl-L-lysyl(9)-[histone H3] + S-adenosyl-L-homocysteine + H(+). It carries out the reaction N(6),N(6)-dimethyl-L-lysyl(9)-[histone H3] + S-adenosyl-L-methionine = N(6),N(6),N(6)-trimethyl-L-lysyl(9)-[histone H3] + S-adenosyl-L-homocysteine + H(+). The enzyme catalyses L-lysyl-[protein] + S-adenosyl-L-methionine = N(6)-methyl-L-lysyl-[protein] + S-adenosyl-L-homocysteine + H(+). It catalyses the reaction N(6)-methyl-L-lysyl-[protein] + S-adenosyl-L-methionine = N(6),N(6)-dimethyl-L-lysyl-[protein] + S-adenosyl-L-homocysteine + H(+). The catalysed reaction is N(6),N(6)-dimethyl-L-lysyl-[protein] + S-adenosyl-L-methionine = N(6),N(6),N(6)-trimethyl-L-lysyl-[protein] + S-adenosyl-L-homocysteine + H(+). It carries out the reaction L-lysyl(9)-[histone H3] + S-adenosyl-L-methionine = N(6)-methyl-L-lysyl(9)-[histone H3] + S-adenosyl-L-homocysteine + H(+). With respect to regulation, an internal loop (autoregulatory loop) inhibits the catalytic activity of the enzyme by blocking the histone H3K9 substrate-binding pocket. Autocatalytic methylation of specific lysine residues in this loop promote a conformational switch that enhances the H3K9me activity of clr4. Its function is as follows. Histone methyltransferase which contributes to the establishment of heterochromatin by specifically methylating histone H3 to form H3K9me. Part of the Clr4 methyltransferase complex (ClrC). ClrC preferentially ubiquitylates H3K14 and ClrC-mediated H3 ubiquitination promotes clr4 methyltransferase activity. Clr4 functions as a reader and writer of H3K9 methylation. It sets the H3K9me mark and afterwards this H3K9me mark is recognized by the chromodomains of clr4 and swi6/HP1, which then recruit additional clr4 leading to the methylation of neighboring nucleosomes. H3K9me represents a specific tag for epigenetic transcriptional repression by recruiting swi6/HP1 to methylated histones which leads to transcriptional silencing within centromeric heterochromatin, telomeres, ribosomal DNA repeats, and the silent mating-type region. Clr4 methyltransferase activity promotes the assembly of a tripartite complex composed of ClrC and complexes involved in siRNA generation. Apart from H3K9, also methylates non-histone proteins such as mlo3. Interacts with mlo3 to promote the processing of centromeric and antisense RNAs. The chain is Histone-lysine N-methyltransferase, H3 lysine-9 specific (clr4) from Schizosaccharomyces pombe (strain 972 / ATCC 24843) (Fission yeast).